A 275-amino-acid polypeptide reads, in one-letter code: Probable aquaporin NIP7-1 (275 aa).

The span at M1–D11 shows a compositional bias: basic and acidic residues. Residues M1–H26 form a disordered region. 2 helical membrane-spanning segments follow: residues I47–S67 and V76–I96. The NPA 1 motif lies at N105–S107. A run of 3 helical transmembrane segments spans residues I127–V147, V161–L181, and L192–S212. Residues N217–A219 carry the NPA 2 motif. The chain crosses the membrane as a helical span at residues F231–T251. S272 carries the post-translational modification Phosphoserine.

It belongs to the MIP/aquaporin (TC 1.A.8) family. NIP (TC 1.A.8.12) subfamily. Expressed in floral buds.

The protein resides in the membrane. Aquaporins facilitate the transport of water and small neutral solutes across cell membranes. This chain is Probable aquaporin NIP7-1 (NIP7-1), found in Arabidopsis thaliana (Mouse-ear cress).